Here is a 201-residue protein sequence, read N- to C-terminus: MELVMKDAKSALEVSETTFGREFNEALVHQVVVAYAAGARQGTRAQLTRSEVSGGGKKPWRQKGTGRARAGSIRSPIWRSGGVTFAAKPQDHSQKVNKKMYRGAIRSILSELVRQERLIVVEKFGIEAPKTKELIAKLKEMELTDVLIVTAEVDENLFLAARNLYKVDVRDVAGIDPVSLIAFDKVLMTADAVKQIEEMLA.

The interval 45–66 (AQLTRSEVSGGGKKPWRQKGTG) is disordered.

This sequence belongs to the universal ribosomal protein uL4 family. Part of the 50S ribosomal subunit.

One of the primary rRNA binding proteins, this protein initially binds near the 5'-end of the 23S rRNA. It is important during the early stages of 50S assembly. It makes multiple contacts with different domains of the 23S rRNA in the assembled 50S subunit and ribosome. Its function is as follows. Forms part of the polypeptide exit tunnel. The chain is Large ribosomal subunit protein uL4 from Aeromonas hydrophila subsp. hydrophila (strain ATCC 7966 / DSM 30187 / BCRC 13018 / CCUG 14551 / JCM 1027 / KCTC 2358 / NCIMB 9240 / NCTC 8049).